The primary structure comprises 612 residues: Dihydroxy-acid dehydratase (612 aa).

D81 lines the Mg(2+) pocket. C122 provides a ligand contact to [2Fe-2S] cluster. Mg(2+) is bound by residues D123 and K124. K124 carries the N6-carboxylysine modification. A [2Fe-2S] cluster-binding site is contributed by C195. E491 provides a ligand contact to Mg(2+). The active-site Proton acceptor is S517.

The protein belongs to the IlvD/Edd family. As to quaternary structure, homodimer. The cofactor is [2Fe-2S] cluster. Requires Mg(2+) as cofactor.

The enzyme catalyses (2R)-2,3-dihydroxy-3-methylbutanoate = 3-methyl-2-oxobutanoate + H2O. It catalyses the reaction (2R,3R)-2,3-dihydroxy-3-methylpentanoate = (S)-3-methyl-2-oxopentanoate + H2O. It participates in amino-acid biosynthesis; L-isoleucine biosynthesis; L-isoleucine from 2-oxobutanoate: step 3/4. It functions in the pathway amino-acid biosynthesis; L-valine biosynthesis; L-valine from pyruvate: step 3/4. Its function is as follows. Functions in the biosynthesis of branched-chain amino acids. Catalyzes the dehydration of (2R,3R)-2,3-dihydroxy-3-methylpentanoate (2,3-dihydroxy-3-methylvalerate) into 2-oxo-3-methylpentanoate (2-oxo-3-methylvalerate) and of (2R)-2,3-dihydroxy-3-methylbutanoate (2,3-dihydroxyisovalerate) into 2-oxo-3-methylbutanoate (2-oxoisovalerate), the penultimate precursor to L-isoleucine and L-valine, respectively. The protein is Dihydroxy-acid dehydratase of Haemophilus influenzae (strain 86-028NP).